We begin with the raw amino-acid sequence, 750 residues long: 3-isopropylmalate dehydratase (750 aa).

Residues C353, C413, and C416 each contribute to the [4Fe-4S] cluster site. The interval 492–524 (KYDGSPEVFKSTQDTTPAVKPPQPASDSSSSGG) is disordered.

Belongs to the aconitase/IPM isomerase family. As to quaternary structure, monomer. Requires [4Fe-4S] cluster as cofactor.

It carries out the reaction (2R,3S)-3-isopropylmalate = (2S)-2-isopropylmalate. Its pathway is amino-acid biosynthesis; L-leucine biosynthesis; L-leucine from 3-methyl-2-oxobutanoate: step 2/4. Catalyzes the isomerization between 2-isopropylmalate and 3-isopropylmalate, via the formation of 2-isopropylmaleate. The polypeptide is 3-isopropylmalate dehydratase (LEU1) (Rhizopus niveus).